The sequence spans 449 residues: Asparagine--tRNA ligase (449 aa).

The protein belongs to the class-II aminoacyl-tRNA synthetase family. As to quaternary structure, homodimer.

The protein resides in the cytoplasm. It carries out the reaction tRNA(Asn) + L-asparagine + ATP = L-asparaginyl-tRNA(Asn) + AMP + diphosphate + H(+). This chain is Asparagine--tRNA ligase, found in Mesomycoplasma hyopneumoniae (strain 7448) (Mycoplasma hyopneumoniae).